The following is a 243-amino-acid chain: Orotidine 5'-phosphate decarboxylase (243 aa).

Residues D16, K38, 65-74 (DLKLHDIPNT), T120, R181, Q190, G210, and R211 each bind substrate. K67 functions as the Proton donor in the catalytic mechanism.

It belongs to the OMP decarboxylase family. Type 1 subfamily. Homodimer.

The catalysed reaction is orotidine 5'-phosphate + H(+) = UMP + CO2. It participates in pyrimidine metabolism; UMP biosynthesis via de novo pathway; UMP from orotate: step 2/2. Functionally, catalyzes the decarboxylation of orotidine 5'-monophosphate (OMP) to uridine 5'-monophosphate (UMP). This is Orotidine 5'-phosphate decarboxylase from Bradyrhizobium sp. (strain ORS 278).